The sequence spans 448 residues: uncharacterized protein (448 aa).

Residues 187-198 (SKGDRGDADDRG) are compositionally biased toward basic and acidic residues. 3 disordered regions span residues 187 to 221 (SKGDRGDADDRGPASVGSGGAPARGAGQQPELPTR), 243 to 270 (LQVPGGTSAAIPSASSTPSLPNLGGATM), and 291 to 361 (LSGL…LPNG). Positions 243 to 261 (LQVPGGTSAAIPSASSTPS) are enriched in low complexity. Positions 307-334 (FDERGQEVRDPADYEHSNEPDERRADDR) are enriched in basic and acidic residues.

It to M.tuberculosis Rv0025 and Rv0739.

This is an uncharacterized protein from Mycobacterium tuberculosis (strain ATCC 25618 / H37Rv).